A 363-amino-acid chain; its full sequence is Ribonuclease P protein subunit p40 (363 aa).

As to quaternary structure, component of nuclear RNase P and RNase MRP ribonucleoproteins. RNase P consists of a catalytic RNA moiety and about 10 protein subunits; POP1, POP4, POP5, POP7, RPP14, RPP21, RPP25, RPP30, RPP38 and RPP40. Within the RNase P complex, POP1, POP7 and RPP25 form the 'finger' subcomplex, POP5, RPP14, RPP40 and homodimeric RPP30 form the 'palm' subcomplex, and RPP21, POP4 and RPP38 form the 'wrist' subcomplex. All subunits of the RNase P complex interact with the catalytic RNA. Several subunits of RNase P are also part of the RNase MRP complex. RNase MRP consists of a catalytic RNA moiety and about 8 protein subunits; POP1, POP7, RPP25, RPP30, RPP38, RPP40 and possibly also POP4 and POP5.

The protein resides in the nucleus. Its subcellular location is the nucleolus. In terms of biological role, component of ribonuclease P, a ribonucleoprotein complex that generates mature tRNA molecules by cleaving their 5'-ends. Also a component of the MRP ribonuclease complex, which cleaves pre-rRNA sequences. The sequence is that of Ribonuclease P protein subunit p40 (Rpp40) from Mus musculus (Mouse).